Here is a 270-residue protein sequence, read N- to C-terminus: Protein N-terminal and lysine N-methyltransferase EFM7 (270 aa).

The tract at residues 1-45 (MSDIESLNGGDLFAEPSDFYKPPPEPHFATYTRDDVPESSTSQQK) is disordered. Residues tryptophan 63, 89-91 (GAA), aspartate 111, tryptophan 158, and serine 182 contribute to the S-adenosyl-L-methionine site.

It belongs to the class I-like SAM-binding methyltransferase superfamily. EFM7 family.

The protein localises to the cytoplasm. In terms of biological role, S-adenosyl-L-methionine-dependent protein methyltransferase that trimethylates the N-terminal glycine 'Gly-2' of elongation factor 1-alpha, before also catalyzing the mono- and dimethylation of 'Lys-3'. The chain is Protein N-terminal and lysine N-methyltransferase EFM7 from Kluyveromyces lactis (strain ATCC 8585 / CBS 2359 / DSM 70799 / NBRC 1267 / NRRL Y-1140 / WM37) (Yeast).